Consider the following 174-residue polypeptide: Nascent polypeptide-associated complex subunit alpha (174 aa).

Residue Ser-2 is modified to N-acetylserine. The 65-residue stretch at 14–78 (NKNEKKAREL…AKVDNFTQKL (65 aa)) folds into the NAC-A/B domain. Residues 85–137 (AQASGIMPSNEDVATKSPEDIQADMQAAAEGSVNAAAEEDDEEGEVDAGDLNK) are disordered. Residue Ser-93 is modified to Phosphoserine. The span at 111 to 120 (AAAEGSVNAA) shows a compositional bias: low complexity. The segment covering 121–132 (AEEDDEEGEVDA) has biased composition (acidic residues). The UBA domain occupies 135–174 (LNKDDIELVVQQTNVSKNQAIKALKAHNGDLVNAIMSLSK).

Belongs to the NAC-alpha family. Part of the nascent polypeptide-associated complex (NAC), consisting of EGD2 and either EGD1 or BTT1. NAC associates with ribosomes via EGD1 or BTT1, and with the CCR4-NOT complex.

The protein localises to the cytoplasm. It localises to the nucleus. Functionally, component of the nascent polypeptide-associated complex (NAC), a dynamic component of the ribosomal exit tunnel, protecting the emerging polypeptides from interaction with other cytoplasmic proteins to ensure appropriate nascent protein targeting. The NAC complex also promotes mitochondrial protein import by enhancing productive ribosome interactions with the outer mitochondrial membrane and blocks the inappropriate interaction of ribosomes translating non-secretory nascent polypeptides with translocation sites in the membrane of the endoplasmic reticulum. EGD2 may also be involved in transcription regulation. In Saccharomyces cerevisiae (strain YJM789) (Baker's yeast), this protein is Nascent polypeptide-associated complex subunit alpha (EGD2).